The following is a 260-amino-acid chain: Thiazole synthase (260 aa).

The Schiff-base intermediate with DXP role is filled by Lys102. Residues Gly163, 189 to 190 (AG), and 211 to 212 (NT) each bind 1-deoxy-D-xylulose 5-phosphate.

This sequence belongs to the ThiG family. As to quaternary structure, homotetramer. Forms heterodimers with either ThiH or ThiS.

It localises to the cytoplasm. The catalysed reaction is [ThiS sulfur-carrier protein]-C-terminal-Gly-aminoethanethioate + 2-iminoacetate + 1-deoxy-D-xylulose 5-phosphate = [ThiS sulfur-carrier protein]-C-terminal Gly-Gly + 2-[(2R,5Z)-2-carboxy-4-methylthiazol-5(2H)-ylidene]ethyl phosphate + 2 H2O + H(+). It participates in cofactor biosynthesis; thiamine diphosphate biosynthesis. Catalyzes the rearrangement of 1-deoxy-D-xylulose 5-phosphate (DXP) to produce the thiazole phosphate moiety of thiamine. Sulfur is provided by the thiocarboxylate moiety of the carrier protein ThiS. In vitro, sulfur can be provided by H(2)S. The sequence is that of Thiazole synthase from Geobacter metallireducens (strain ATCC 53774 / DSM 7210 / GS-15).